Here is a 640-residue protein sequence, read N- to C-terminus: Paramyosin, short form (640 aa).

2 nonhelical region regions span residues 1–122 and 420–640; these read MALA…PDTV and KLEQ…TITE. The stretch at 123–619 forms a coiled coil; it reads VERSRQRRRR…IIRAKHRTFV (497 aa).

Belongs to the paramyosin family. In terms of processing, phosphorylated. As to expression, found in all adult muscle tissues except in indirect flight muscles and a set of temporary abdominal muscles. Not detected in larval muscle.

The protein localises to the cytoplasm. Its subcellular location is the myofibril. In terms of biological role, paramyosin is a major structural component of many thick filaments isolated from invertebrate muscles. In Drosophila melanogaster (Fruit fly), this protein is Paramyosin, short form (Prm).